We begin with the raw amino-acid sequence, 369 residues long: Somatostatin receptor type 2 (369 aa).

Over 1–43 (MEMSSEQLNGSQVWVSSPFDLNGSLGPSNGSNQTEPYYDMTSN) the chain is Extracellular. Residues asparagine 9, asparagine 22, asparagine 29, and asparagine 32 are each glycosylated (N-linked (GlcNAc...) asparagine). The chain crosses the membrane as a helical span at residues 44–67 (AVLTFIYFVVCVVGLCGNTLVIYV). Residues 68–78 (ILRYAKMKTIT) are Cytoplasmic-facing. Residues 79 to 103 (NIYILNLAIADELFMLGLPFLAMQV) form a helical membrane-spanning segment. At 104-118 (ALVHWPFGKAICRVV) the chain is on the extracellular side. Cysteine 115 and cysteine 193 are oxidised to a cystine. A helical transmembrane segment spans residues 119–138 (MTVDGINQFTSIFCLTVMSI). At 139–161 (DRYLAVVHPIKSAKWRRPRTAKM) the chain is on the cytoplasmic side. The helical transmembrane segment at 162–181 (INVAVWCVSLLVILPIMIYA) threads the bilayer. Over 182–207 (GLRSNQWGRSSCTINWPGESGAWYTG) the chain is Extracellular. Residues 208–229 (FIIYAFILGFLVPLTIICLCYL) form a helical membrane-spanning segment. Topologically, residues 230–253 (FIIIKVKSSGIRVGSSKRKKSEKK) are cytoplasmic. Residues 254–278 (VTRMVSIVVAVFIFCWLPFYIFNVS) traverse the membrane as a helical segment. The Extracellular portion of the chain corresponds to 279-288 (SVSVAISPTP). Residues 289 to 303 (ALKGMFDFVVILTYA) traverse the membrane as a helical segment. The Cytoplasmic segment spans residues 304–369 (NSCANPILYA…LLNGDLQTSI (66 aa)). The S-palmitoyl cysteine moiety is linked to residue cysteine 328. A phosphoserine mark is found at serine 341, serine 343, and serine 348. Residues threonine 353 and threonine 354 each carry the phosphothreonine modification.

This sequence belongs to the G-protein coupled receptor 1 family. In terms of assembly, homodimer and heterodimer with SSTR3 and SSTR5. Heterodimerization with SSTR3 inactivates SSTR3 receptor function. Heterodimerization with SSTR5 is enhanced by agonist stimulation of SSTR2 and increases SSTR2 cell growth inhibition activity. Following agonist stimulation, homodimers dissociate into monomers which is required for receptor internalization. Interacts with beta-arrestin; this interaction is necessary for receptor internalization and is destabilized by heterodimerization with SSTR5 which results in increased recycling of SSTR2 to the cell surface. Interacts (via C-terminus) with SHANK1 (via PDZ domain). Post-translationally, phosphorylated on serine and threonine residues in response to agonist stimulation, leading to receptor desensitization and rapid internalization. Phosphorylated to a greater extent on serine than threonine residues. Threonine phosphorylation is required for arrestin binding and receptor endocytosis but is not necessary for desensitization. In terms of tissue distribution, cerebrum and kidney.

The protein resides in the cell membrane. It is found in the cytoplasm. Functionally, receptor for somatostatin-14 and -28. This receptor is coupled via pertussis toxin sensitive G proteins to inhibition of adenylyl cyclase. In addition it stimulates phosphotyrosine phosphatase and PLC via pertussis toxin insensitive as well as sensitive G proteins. Inhibits calcium entry by suppressing voltage-dependent calcium channels. Acts as the functionally dominant somatostatin receptor in pancreatic alpha- and beta-cells where it mediates the inhibitory effect of somatostatin-14 on hormone secretion. Inhibits cell growth through enhancement of MAPK1 and MAPK2 phosphorylation and subsequent up-regulation of CDKN1B. Stimulates neuronal migration and axon outgrowth and may participate in neuron development and maturation during brain development. Mediates negative regulation of insulin receptor signaling through PTPN6. Inactivates SSTR3 receptor function following heterodimerization. The chain is Somatostatin receptor type 2 (Sstr2) from Mus musculus (Mouse).